The following is a 331-amino-acid chain: DNA fragmentation factor subunit alpha (331 aa).

Position 1 is an N-acetylmethionine (methionine 1). Positions 17-96 (PLKPCLLRRN…ALACNEKWIY (80 aa)) constitute a CIDE-N domain. Phosphothreonine is present on threonine 243. Residues 306–331 (LRNLSARRSPLPGEPQRPKRAKRDSS) are disordered.

In terms of assembly, heterodimer of DFFA and DFFB. Post-translationally, caspase-3 cleaves DFF45 at 2 sites to generate an active factor.

The protein resides in the cytoplasm. Inhibitor of the caspase-activated DNase (DFF40). This Mus musculus (Mouse) protein is DNA fragmentation factor subunit alpha (Dffa).